Here is a 224-residue protein sequence, read N- to C-terminus: PKHD-type hydroxylase Sbal_3634 (224 aa).

One can recognise a Fe2OG dioxygenase domain in the interval 78–176 (QFYPPLFNRY…RTAAFMWLQS (99 aa)). Histidine 96, aspartate 98, and histidine 157 together coordinate Fe cation. Arginine 167 provides a ligand contact to 2-oxoglutarate.

The cofactor is Fe(2+). It depends on L-ascorbate as a cofactor.

This is PKHD-type hydroxylase Sbal_3634 from Shewanella baltica (strain OS155 / ATCC BAA-1091).